Here is a 467-residue protein sequence, read N- to C-terminus: MVSIWTIALFLLGAAKAKEVCYEQIGCFSDAEPWAGTAIRPLKVLPWSPERIGTRFLLYTNKNPNNFQTLLPSDPSTIEASNFQTDKKTRFIIHGFIDKGEENWLLDMCKNMFKVEEVNCICVDWKKGSQTSYTQAANNVRVVGAQVAQMLSMLSANYSYSPSQVQLIGHSLGAHVAGEAGSRTPGLGRITGLDPVEASFQGTPEEVRLDPTDADFVDVIHTDAAPLIPFLGFGTSQQMGHLDFFPNGGEEMPGCKKNALSQIVDLDGIWEGTRDFVACNHLRSYKYYSESILNPDGFASYPCASYRAFESNKCFPCPDQGCPQMGHYADKFAVKTSDETQKYFLNTGDSSNFARWRYGVSITLSGKRATGQAKVALFGSKGNTHQFNIFKGILKPGSTHSNEFDAKLDVGTIEKVKFLWNNNVVNPTFPKVGAAKITVQKGEEKTVHSFCSESTVREDVLLTLTPC.

The first 17 residues, 1-17, serve as a signal peptide directing secretion; it reads MVSIWTIALFLLGAAKA. 2 disulfide bridges follow: Cys-21–Cys-27 and Cys-109–Cys-120. A glycan (N-linked (GlcNAc...) asparagine) is linked at Asn-157. Ser-171 serves as the catalytic Nucleophile. Asp-194 acts as the Charge relay system in catalysis. Residues Glu-205, Arg-208, Asp-210, and Asp-213 each coordinate Ca(2+). Cys-255 and Cys-279 are joined by a disulfide. The active-site Charge relay system is His-281. 3 disulfides stabilise this stretch: Cys-303–Cys-314, Cys-317–Cys-322, and Cys-451–Cys-467. The region spanning 356–467 is the PLAT domain; it reads WRYGVSITLS…EDVLLTLTPC (112 aa).

It belongs to the AB hydrolase superfamily. Lipase family. In terms of tissue distribution, detected in pancreas (at protein level).

It is found in the secreted. May function as inhibitor of dietary triglyceride digestion. Lacks detectable lipase activity towards triglycerides, diglycerides, phosphatidylcholine, galactolipids or cholesterol esters (in vitro). The sequence is that of Inactive pancreatic lipase-related protein 1 (PNLIPRP1) from Canis lupus familiaris (Dog).